A 511-amino-acid polypeptide reads, in one-letter code: Probable lipid II flippase MurJ (511 aa).

The next 11 membrane-spanning stretches (helical) occupy residues 25 to 45, 85 to 105, 133 to 153, 156 to 178, 245 to 265, 271 to 291, 315 to 335, 356 to 376, 400 to 420, 442 to 462, and 481 to 501; these read DILIASIFGASMFTDAFFISF, SSILGFMSFFLLLLTILGGFF, IMFPYILLISLSSLCSSILNS, YFSIPAFSPIFLNISIIFFSVFF, ISLIINTIFSSLLNSGSISWI, LIEFPVGILGVSLSTVLFTSL, LIVSLPGSVILFFLAKPVIIV, LYSCGLISFIFVKILSSAFYA, FLIFYFQHAGIALSLSITSWV, FIFIIYIILATLVMIVILFVV, and LFFGKYVSGITYLFMMNILGI.

It belongs to the MurJ/MviN family.

The protein localises to the cell inner membrane. It functions in the pathway cell wall biogenesis; peptidoglycan biosynthesis. Involved in peptidoglycan biosynthesis. Transports lipid-linked peptidoglycan precursors from the inner to the outer leaflet of the cytoplasmic membrane. This chain is Probable lipid II flippase MurJ, found in Buchnera aphidicola subsp. Acyrthosiphon pisum (strain APS) (Acyrthosiphon pisum symbiotic bacterium).